Reading from the N-terminus, the 442-residue chain is 3-phosphoshikimate 1-carboxyvinyltransferase (442 aa).

3-phosphoshikimate-binding residues include lysine 27, serine 28, and arginine 32. Lysine 27 contributes to the phosphoenolpyruvate binding site. 2 residues coordinate phosphoenolpyruvate: glycine 100 and arginine 128. Positions 174, 175, 176, 204, 321, and 348 each coordinate 3-phosphoshikimate. Glutamine 176 lines the phosphoenolpyruvate pocket. The active-site Proton acceptor is aspartate 321. Residues arginine 352, arginine 394, and lysine 424 each coordinate phosphoenolpyruvate.

Belongs to the EPSP synthase family. In terms of assembly, monomer.

The protein localises to the cytoplasm. The enzyme catalyses 3-phosphoshikimate + phosphoenolpyruvate = 5-O-(1-carboxyvinyl)-3-phosphoshikimate + phosphate. Its pathway is metabolic intermediate biosynthesis; chorismate biosynthesis; chorismate from D-erythrose 4-phosphate and phosphoenolpyruvate: step 6/7. Its function is as follows. Catalyzes the transfer of the enolpyruvyl moiety of phosphoenolpyruvate (PEP) to the 5-hydroxyl of shikimate-3-phosphate (S3P) to produce enolpyruvyl shikimate-3-phosphate and inorganic phosphate. The polypeptide is 3-phosphoshikimate 1-carboxyvinyltransferase (Herminiimonas arsenicoxydans).